Consider the following 259-residue polypeptide: Phosphate import ATP-binding protein PstB (259 aa).

The 242-residue stretch at 13 to 254 (IQVRDLNFYY…PAQRQTEDYI (242 aa)) folds into the ABC transporter domain. Residue 45-52 (GPSGCGKS) coordinates ATP.

Belongs to the ABC transporter superfamily. Phosphate importer (TC 3.A.1.7) family. In terms of assembly, the complex is composed of two ATP-binding proteins (PstB), two transmembrane proteins (PstC and PstA) and a solute-binding protein (PstS).

The protein localises to the cell inner membrane. It catalyses the reaction phosphate(out) + ATP + H2O = ADP + 2 phosphate(in) + H(+). Part of the ABC transporter complex PstSACB involved in phosphate import. Responsible for energy coupling to the transport system. This is Phosphate import ATP-binding protein PstB from Edwardsiella tarda.